Here is a 364-residue protein sequence, read N- to C-terminus: Peptide chain release factor 2 (364 aa).

Residue Gln252 is modified to N5-methylglutamine.

This sequence belongs to the prokaryotic/mitochondrial release factor family. Methylated by PrmC. Methylation increases the termination efficiency of RF2.

The protein resides in the cytoplasm. Peptide chain release factor 2 directs the termination of translation in response to the peptide chain termination codons UGA and UAA. The sequence is that of Peptide chain release factor 2 from Clostridium perfringens (strain SM101 / Type A).